Consider the following 89-residue polypeptide: Acylphosphatase (89 aa).

An Acylphosphatase-like domain is found at 3 to 89; the sequence is QKHLQVFGTV…SEDFSDFKSI (87 aa). Residues Arg18 and Asn36 contribute to the active site.

The protein belongs to the acylphosphatase family.

It catalyses the reaction an acyl phosphate + H2O = a carboxylate + phosphate + H(+). The protein is Acylphosphatase (acyP) of Staphylococcus haemolyticus (strain JCSC1435).